The primary structure comprises 266 residues: Chymotrypsin-like elastase family member 1 (266 aa).

Positions 1 to 16 (MLRFLVFATLVLYGHS) are cleaved as a signal peptide. The propeptide at 17-26 (TQDFPETNAR) is activation peptide. A Peptidase S1 domain is found at 27-264 (VVGGTEAGRN…YISWINKTIA (238 aa)). Cysteine 56 and cysteine 72 are joined by a disulfide. Catalysis depends on histidine 71, which acts as the Charge relay system. Positions 85, 87, 90, and 95 each coordinate Ca(2+). N-linked (GlcNAc...) asparagine glycosylation is present at asparagine 87. The active-site Charge relay system is aspartate 119. Intrachain disulfides connect cysteine 153–cysteine 220, cysteine 184–cysteine 200, and cysteine 210–cysteine 240. Residue serine 214 is the Charge relay system of the active site. Asparagine 241 and asparagine 260 each carry an N-linked (GlcNAc...) asparagine glycan.

Belongs to the peptidase S1 family. Elastase subfamily. Ca(2+) serves as cofactor.

It localises to the secreted. It catalyses the reaction Hydrolysis of proteins, including elastin. Preferential cleavage: Ala-|-Xaa.. Functionally, serine proteases that hydrolyze many proteins in addition to elastin. This is Chymotrypsin-like elastase family member 1 (CELA1) from Macaca fascicularis (Crab-eating macaque).